Consider the following 135-residue polypeptide: MKFLTTNFLKCSVKACDTSNDNFPLQYDGSKCQLVQDESIEFNPEFLLNIVDRVDWPAVLTVAAELGNNALPPTKPSFPSSIQELTDDDMAILNDLHTLLLQTSIAEGEMKCRNCGHIYYIKNGIPNLLLPPHLV.

Positions 2–131 (KFLTTNFLKC…KNGIPNLLLP (130 aa)) constitute a TRM112 domain.

Belongs to the TRM112 family. As to quaternary structure, heterodimer of MTQ2-TRM112, forming the eRF1 methyltransferase. TRM112 is necessary for the solubility and activity of the catalytic subunit MTQ2. Interacts with TRM11; required for full tRNA methyltransferase activity. Interacts with BUD23; required for full rRNA methyltransferase activity. Interacts with RCM1, NOP2, TRM9 and LYS9.

It is found in the cytoplasm. The protein resides in the nucleus. In terms of biological role, acts as an activator of both rRNA/tRNA and protein methyltransferases. Together with methyltransferase MTQ2, required for the methylation of eRF1 on 'Gln-182'. Together with methyltransferase TRM11, required for the formation of 2-methylguanosine at position 10 (m2G10) in tRNA. Together with methyltransferase BUD23, required for the formation of 7-methylguanine at position 1575 (m7G1575) in 18S rRNA. Involved in biogenesis of both 40S and 60S ribosomal subunits. The protein is Multifunctional methyltransferase subunit TRM112 (TRM112) of Saccharomyces cerevisiae (strain ATCC 204508 / S288c) (Baker's yeast).